The chain runs to 378 residues: Circumsporozoite protein (378 aa).

An N-terminal signal peptide occupies residues 1–22; sequence MKNFILLAVSSILLVDLFPTHC. Positions 51–295 are disordered; sequence HVGQSASRGR…NNEGANAPNE (245 aa). Residues 72-100 are compositionally biased toward basic and acidic residues; sequence DAKKKKDGKKAEPKNPRENKLKQPGDRAD. The interval 80 to 88 is required for the binding to heparan sulfate proteoglycans (HSPGs) on the surface of host hepatocytes; that stretch reads KKAEPKNPR. Residues 91–95 are region I; contains the proteolytic cleavage site; sequence KLKQP. Tandem repeats lie at residues 95-103, 104-112, 113-121, 122-130, 131-139, 140-148, 149-157, 158-166, 167-175, 176-184, 185-193, 194-202, 203-211, 212-220, 221-229, 230-238, 239-247, 248-256, and 257-265. Positions 95-265 are 19 X 9 AA tandem repeats of [PA]-G-D-R-A-[DA]-G-Q-P; that stretch reads PGDRADGQPA…PAGDRAAGQP (171 aa). Residues 266 to 284 are compositionally biased toward gly residues; that stretch reads AGNGAGGQAAGGNAGGGQG. The segment covering 285–295 has biased composition (low complexity); that stretch reads QNNEGANAPNE. In terms of domain architecture, TSP type-1 spans 304-356; sequence KVRATVGTEWTPCSVTCGVGVRVRRRVNAANKKPEDLTLNDLETDVCTMDKCA. 2 disulfides stabilise this stretch: Cys316–Cys350 and Cys320–Cys355. Thr319 carries O-linked (Fuc) threonine glycosylation. Cys355 is lipidated: GPI-anchor amidated cysteine. Positions 356–378 are cleaved as a propeptide — removed in mature form; it reads AGIFNVVSNSLGLVILLVLALFN.

Belongs to the plasmodium circumsporozoite protein family. During host cell invasion, proteolytically cleaved at the cell membrane in the region I by a papain-like cysteine protease of parasite origin. Cleavage is triggered by the sporozoite contact with highly sulfated heparan sulfate proteoglycans (HSPGs) present on the host hepatocyte cell surface. Cleavage exposes the TSP type-1 (TSR) domain and is required for productive invasion of host hepatocytes but not for adhesion to the host cell membrane. Cleavage is dispensable for sporozoite development in the oocyst, motility and for traversal of host and vector cells. Post-translationally, O-glycosylated; maybe by POFUT2.

Its subcellular location is the cell membrane. The protein localises to the cytoplasm. Essential sporozoite protein. In the mosquito vector, required for sporozoite development in the oocyst, migration through the vector hemolymph and entry into the vector salivary glands. In the vertebrate host, required for sporozoite migration through the host dermis and infection of host hepatocytes. Binds to highly sulfated heparan sulfate proteoglycans (HSPGs) on the surface of host hepatocytes. Its function is as follows. In the vertebrate host, binds to highly sulfated heparan sulfate proteoglycans (HSPGs) on the surface of host hepatocytes and is required for sporozoite invasion of the host hepatocytes. This chain is Circumsporozoite protein, found in Plasmodium vivax (strain Belem).